Reading from the N-terminus, the 673-residue chain is UvrABC system protein B (673 aa).

The Helicase ATP-binding domain maps to 25–413 (EGIESGLAHQ…GSDIAEQVVR (389 aa)). An ATP-binding site is contributed by 38-45 (GVTGSGKT). Residues 91–114 (YYDYYQPEAYVPTTDTFIEKDASV) carry the Beta-hairpin motif. Residues 430 to 583 (QVDDLLSEIN…QHQYNLDNNI (154 aa)) form the Helicase C-terminal domain. Residues 634–669 (DTKIVELEKLMQGHAQNLEFEQAAAMRDKIAKLRIQ) enclose the UVR domain.

It belongs to the UvrB family. Forms a heterotetramer with UvrA during the search for lesions. Interacts with UvrC in an incision complex.

It is found in the cytoplasm. Its function is as follows. The UvrABC repair system catalyzes the recognition and processing of DNA lesions. A damage recognition complex composed of 2 UvrA and 2 UvrB subunits scans DNA for abnormalities. Upon binding of the UvrA(2)B(2) complex to a putative damaged site, the DNA wraps around one UvrB monomer. DNA wrap is dependent on ATP binding by UvrB and probably causes local melting of the DNA helix, facilitating insertion of UvrB beta-hairpin between the DNA strands. Then UvrB probes one DNA strand for the presence of a lesion. If a lesion is found the UvrA subunits dissociate and the UvrB-DNA preincision complex is formed. This complex is subsequently bound by UvrC and the second UvrB is released. If no lesion is found, the DNA wraps around the other UvrB subunit that will check the other stand for damage. This is UvrABC system protein B from Colwellia psychrerythraea (strain 34H / ATCC BAA-681) (Vibrio psychroerythus).